The primary structure comprises 504 residues: Plasma protease C1 inhibitor (504 aa).

An N-terminal signal peptide occupies residues 1–22 (MASKLTPLTLLLLLLAGDRAFS). A disordered region spans residues 23–75 (DSEVTSHSSQDPLVVQEGSRDSVPERDGSRSPIEHTGQSSTWPTTSGSTKISN). Residues 24-33 (SEVTSHSSQD) are compositionally biased toward polar residues. Over residues 40 to 55 (GSRDSVPERDGSRSPI) the composition is skewed to basic and acidic residues. Over residues 58-75 (TGQSSTWPTTSGSTKISN) the composition is skewed to polar residues. Asparagine 75, asparagine 83, asparagine 107, asparagine 243, and asparagine 356 each carry an N-linked (GlcNAc...) asparagine glycan. A disordered region spans residues 94–132 (AQLPEDSPSQSPVNSSSPPSTASAPPTQAPTEPLCPEPL). Over residues 100–125 (SPSQSPVNSSSPPSTASAPPTQAPTE) the composition is skewed to low complexity.

It belongs to the serpin family. In terms of assembly, interacts with MASP1.

It localises to the secreted. Serine protease inhibitor, which acrs as a regulator of the classical complement pathway. Forms a proteolytically inactive stoichiometric complex with the C1r or C1s proteases. May also regulate blood coagulation, fibrinolysis and the generation of kinins. Very efficient inhibitor of FXIIa. Inhibits chymotrypsin and kallikrein. In Rattus norvegicus (Rat), this protein is Plasma protease C1 inhibitor (Serping1).